A 466-amino-acid chain; its full sequence is Trigger factor (466 aa).

In terms of domain architecture, PPIase FKBP-type spans Gly-162–Pro-243. The segment at Gly-428–Thr-466 is disordered. Residues Ala-457 to Thr-466 are compositionally biased toward low complexity.

It belongs to the FKBP-type PPIase family. Tig subfamily.

Its subcellular location is the cytoplasm. It catalyses the reaction [protein]-peptidylproline (omega=180) = [protein]-peptidylproline (omega=0). Involved in protein export. Acts as a chaperone by maintaining the newly synthesized protein in an open conformation. Functions as a peptidyl-prolyl cis-trans isomerase. In Mycobacterium tuberculosis (strain ATCC 25177 / H37Ra), this protein is Trigger factor.